Reading from the N-terminus, the 258-residue chain is 5'-nucleotidase SurE (258 aa).

A divalent metal cation-binding residues include D14, D15, S45, and N101.

It belongs to the SurE nucleotidase family. Requires a divalent metal cation as cofactor.

The protein localises to the cytoplasm. The catalysed reaction is a ribonucleoside 5'-phosphate + H2O = a ribonucleoside + phosphate. Functionally, nucleotidase that shows phosphatase activity on nucleoside 5'-monophosphates. The protein is 5'-nucleotidase SurE of Chlorobium phaeobacteroides (strain DSM 266 / SMG 266 / 2430).